The chain runs to 257 residues: S-methyl-5'-thioadenosine phosphorylase (257 aa).

Phosphate contacts are provided by residues Ser10, 50 to 51 (RH), and 83 to 84 (TA). Met180 contributes to the substrate binding site. Phosphate is bound at residue Thr181. 204-206 (DYD) serves as a coordination point for substrate.

It belongs to the PNP/MTAP phosphorylase family. MTAP subfamily. As to quaternary structure, homohexamer. Dimer of a homotrimer.

The enzyme catalyses S-methyl-5'-thioadenosine + phosphate = 5-(methylsulfanyl)-alpha-D-ribose 1-phosphate + adenine. It catalyses the reaction adenosine + phosphate = alpha-D-ribose 1-phosphate + adenine. Its pathway is amino-acid biosynthesis; L-methionine biosynthesis via salvage pathway; S-methyl-5-thio-alpha-D-ribose 1-phosphate from S-methyl-5'-thioadenosine (phosphorylase route): step 1/1. Catalyzes the reversible phosphorylation of S-methyl-5'-thioadenosine (MTA) to adenine and 5-methylthioribose-1-phosphate. Involved in the breakdown of MTA, a major by-product of polyamine biosynthesis. Responsible for the first step in the methionine salvage pathway after MTA has been generated from S-adenosylmethionine. Has broad substrate specificity with 6-aminopurine nucleosides as preferred substrates. Can also use adenosine as substrate to form ribose 1-phosphate. The chain is S-methyl-5'-thioadenosine phosphorylase from Thermococcus kodakarensis (strain ATCC BAA-918 / JCM 12380 / KOD1) (Pyrococcus kodakaraensis (strain KOD1)).